Here is a 262-residue protein sequence, read N- to C-terminus: Probable proteasome subunit beta type-7 (262 aa).

It belongs to the peptidase T1B family. The 26S proteasome consists of a 20S proteasome core and two 19S regulatory subunits. The 20S proteasome core is composed of 28 subunits that are arranged in four stacked rings, resulting in a barrel-shaped structure. The two end rings are each formed by seven alpha subunits, and the two central rings are each formed by seven beta subunits. The catalytic chamber with the active sites is on the inside of the barrel.

It is found in the cytoplasm. Its subcellular location is the nucleus. In terms of biological role, non-catalytic component of the proteasome, a multicatalytic proteinase complex which is characterized by its ability to cleave peptides with Arg, Phe, Tyr, Leu, and Glu adjacent to the leaving group at neutral or slightly basic pH. The proteasome has an ATP-dependent proteolytic activity. This Schizosaccharomyces pombe (strain 972 / ATCC 24843) (Fission yeast) protein is Probable proteasome subunit beta type-7.